We begin with the raw amino-acid sequence, 403 residues long: Chalcone synthase 2 (403 aa).

Residue R59–S66 participates in CoA binding. C168 (acyl-thioester intermediate) is an active-site residue. Substrate is bound at residue G220–D221. A313 serves as a coordination point for CoA.

The protein belongs to the thiolase-like superfamily. Chalcone/stilbene synthases family. In terms of assembly, homodimer.

It catalyses the reaction (E)-4-coumaroyl-CoA + 3 malonyl-CoA + 3 H(+) = 2',4,4',6'-tetrahydroxychalcone + 3 CO2 + 4 CoA. It participates in secondary metabolite biosynthesis; flavonoid biosynthesis. Functionally, the primary product of this enzyme is 4,2',4',6'-tetrahydroxychalcone (also termed naringenin-chalcone or chalcone) which can under specific conditions spontaneously isomerize into naringenin. This is Chalcone synthase 2 (CHS2) from Oryza sativa subsp. japonica (Rice).